The chain runs to 266 residues: Glucosamine-6-phosphate deaminase (266 aa).

Residue D67 is the Proton acceptor; for enolization step of the active site. Residue N139 is the For ring-opening step of the active site. H141 functions as the Proton acceptor; for ring-opening step in the catalytic mechanism. E146 serves as the catalytic For ring-opening step.

It belongs to the glucosamine/galactosamine-6-phosphate isomerase family. NagB subfamily. In terms of assembly, homohexamer.

It carries out the reaction alpha-D-glucosamine 6-phosphate + H2O = beta-D-fructose 6-phosphate + NH4(+). Its pathway is amino-sugar metabolism; N-acetylneuraminate degradation; D-fructose 6-phosphate from N-acetylneuraminate: step 5/5. Functionally, catalyzes the reversible isomerization-deamination of glucosamine 6-phosphate (GlcN6P) to form fructose 6-phosphate (Fru6P) and ammonium ion. The protein is Glucosamine-6-phosphate deaminase of Marinomonas sp. (strain MWYL1).